The primary structure comprises 166 residues: MKWTALVIVAVLQTQFPVTAAQSFGLLDPKLCYLLDGILFIYGVIVTALFLRAKFSRSADAPAYQHGQNPVYNELNVGRREEYAVLDRRGGFDPEMGGKPQRKKNPHEVVYNELRKDKMAEAYSEIGMKSDNQRRRGKGHDGVYQGLSTATKDTYDALHMQALPPR.

Positions 1 to 21 (MKWTALVIVAVLQTQFPVTAA) are cleaved as a signal peptide. The Extracellular portion of the chain corresponds to 22-30 (QSFGLLDPK). The helical transmembrane segment at 31–51 (LCYLLDGILFIYGVIVTALFL) threads the bilayer. Residues 52-166 (RAKFSRSADA…ALHMQALPPR (115 aa)) lie on the Cytoplasmic side of the membrane. A Phosphoserine modification is found at S58. ITAM domains are found at residues 61 to 89 (APAYQHGQNPVYNELNVGRREEYAVLDRR), 100 to 128 (PQRKKNPHEVVYNELRKDKMAEAYSEIGM), and 133 to 161 (QRRRGKGHDGVYQGLSTATKDTYDALHMQ). Residues Y64, Y72, Y83, Y111, Y123, Y144, and Y155 each carry the phosphotyrosine modification. The disordered stretch occupies residues 126–156 (IGMKSDNQRRRGKGHDGVYQGLSTATKDTYD).

Belongs to the CD3Z/FCER1G family. As to quaternary structure, the TCR-CD3 complex is composed of a CD3D/CD3E and a CD3G/CD3E heterodimers that preferentially associate with TCRalpha and TCRbeta, respectively, to form TCRalpha/CD3E/CD3G and TCRbeta/CD3G/CD3E trimers. In turn, the hexamer interacts with CD3Z homodimer to form the TCR-CD3 complex. Alternatively, TCRalpha and TCRbeta can be replaced by TCRgamma and TCRdelta. Interacts with SLA. Interacts with TRAT1. Interacts with DOCK2. Interacts with SLA2. Interacts with SHB. Interacts with ZAP70. Interacts (tyrosine phosphorylated) with SHC1 (via SH2 domain). Interacts with PTPRC. Interacts with CRK; this interaction regulates CD3Z phosphorylation. Interacts (on T cell side) with CD81, ICAM1 and CD9 at immunological synapses between antigen-presenting cells and T cells. Interacts with CD160. Interacts with LY6E. Interacts with LY6E. The signaling subunit of immunoglobulin gamma (IgG) Fc receptor complex. As a homodimer or a heterodimer with FCER1G, associates with the ligand binding subunit FCGR3A (via transmembrane domain); this interaction is a prerequisite for Fc receptor complex expression on the cell surface. Interacts with CD5. In terms of processing, phosphorylated on Tyr residues after T-cell receptor triggering by LCK in association with CD4/CD8.

The protein localises to the cell membrane. Part of the TCR-CD3 complex present on T-lymphocyte cell surface that plays an essential role in adaptive immune response. When antigen presenting cells (APCs) activate T-cell receptor (TCR), TCR-mediated signals are transmitted across the cell membrane by the CD3 chains CD3D, CD3E, CD3G and CD3Z. All CD3 chains contain immunoreceptor tyrosine-based activation motifs (ITAMs) in their cytoplasmic domain. Upon TCR engagement, these motifs become phosphorylated by Src family protein tyrosine kinases LCK and FYN, resulting in the activation of downstream signaling pathways. CD3Z ITAMs phosphorylation creates multiple docking sites for the protein kinase ZAP70 leading to ZAP70 phosphorylation and its conversion into a catalytically active enzyme. Plays an important role in intrathymic T-cell differentiation. Additionally, participates in the activity-dependent synapse formation of retinal ganglion cells (RGCs) in both the retina and dorsal lateral geniculate nucleus (dLGN). The chain is T-cell surface glycoprotein CD3 zeta chain (CD247) from Ovis aries (Sheep).